A 362-amino-acid polypeptide reads, in one-letter code: Hydroxycarboxylate dehydrogenase A (362 aa).

Positions 173, 257, and 274 each coordinate Zn(2+).

It belongs to the iron-containing alcohol dehydrogenase family. Zn(2+) is required as a cofactor.

It carries out the reaction 2-hydroxybutanoate + NADP(+) = 2-oxobutanoate + NADPH + H(+). The catalysed reaction is 2-hydroxyglutarate + NADP(+) = 2-oxoglutarate + NADPH + H(+). Its function is as follows. Catalyzes the NADPH-dependent reduction of 2-oxoglutarate and 2-oxobutanoate, leading to the respective 2-hydroxycarboxylate. Cannot use NADH instead of NADPH as a redox partner. Do not catalyze the reverse reactions. This Escherichia coli (strain K12) protein is Hydroxycarboxylate dehydrogenase A.